A 342-amino-acid polypeptide reads, in one-letter code: Phosphoribosylformylglycinamidine cyclo-ligase (342 aa).

The protein belongs to the AIR synthase family.

The protein localises to the cytoplasm. It carries out the reaction 2-formamido-N(1)-(5-O-phospho-beta-D-ribosyl)acetamidine + ATP = 5-amino-1-(5-phospho-beta-D-ribosyl)imidazole + ADP + phosphate + H(+). The protein operates within purine metabolism; IMP biosynthesis via de novo pathway; 5-amino-1-(5-phospho-D-ribosyl)imidazole from N(2)-formyl-N(1)-(5-phospho-D-ribosyl)glycinamide: step 2/2. This chain is Phosphoribosylformylglycinamidine cyclo-ligase, found in Staphylococcus aureus (strain Mu3 / ATCC 700698).